The sequence spans 326 residues: Phospho-N-acetylmuramoyl-pentapeptide-transferase (326 aa).

The next 10 helical transmembrane spans lie at 2-22 (ILAT…FPYF), 51-71 (VPPM…LLWV), 73-93 (LTPE…LGFI), 113-133 (ILIQ…YSAE), 143-163 (GVII…IVGS), 175-195 (GLAA…AYIT), 199-219 (MNIT…LWFN), 225-245 (IFMG…TSVL), 250-270 (MLFA…IIQI), and 305-325 (VIVM…ITFL).

The protein belongs to the glycosyltransferase 4 family. MraY subfamily. Mg(2+) serves as cofactor.

The protein localises to the cell membrane. It carries out the reaction UDP-N-acetyl-alpha-D-muramoyl-L-alanyl-gamma-D-glutamyl-meso-2,6-diaminopimeloyl-D-alanyl-D-alanine + di-trans,octa-cis-undecaprenyl phosphate = di-trans,octa-cis-undecaprenyl diphospho-N-acetyl-alpha-D-muramoyl-L-alanyl-D-glutamyl-meso-2,6-diaminopimeloyl-D-alanyl-D-alanine + UMP. The protein operates within cell wall biogenesis; peptidoglycan biosynthesis. Functionally, catalyzes the initial step of the lipid cycle reactions in the biosynthesis of the cell wall peptidoglycan: transfers peptidoglycan precursor phospho-MurNAc-pentapeptide from UDP-MurNAc-pentapeptide onto the lipid carrier undecaprenyl phosphate, yielding undecaprenyl-pyrophosphoryl-MurNAc-pentapeptide, known as lipid I. This is Phospho-N-acetylmuramoyl-pentapeptide-transferase from Wolbachia sp. subsp. Drosophila simulans (strain wRi).